The sequence spans 210 residues: Adenylate kinase isoenzyme 1 (210 aa).

Residue 30-35 (GSGKGT) participates in ATP binding. Positions 50–79 (SSGDLLRDEVKSGSPRGAQLTAIMESGALV) are NMP. AMP-binding positions include Ser51, Arg56, 77-79 (ALV), 107-110 (GYPR), and Gln114. The tract at residues 144–154 (HRAQTSGRADD) is LID. ATP is bound at residue Arg145. AMP is bound by residues Arg151 and Arg162. Gly190 lines the ATP pocket.

The protein belongs to the adenylate kinase family. AK1 subfamily. In terms of assembly, monomer.

The protein localises to the cytoplasm. The enzyme catalyses AMP + ATP = 2 ADP. Its function is as follows. Catalyzes the reversible transfer of the terminal phosphate group between ATP and AMP. Plays an important role in cellular energy homeostasis and in adenine nucleotide metabolism. The sequence is that of Adenylate kinase isoenzyme 1 from Caenorhabditis elegans.